A 247-amino-acid polypeptide reads, in one-letter code: Carboxy-S-adenosyl-L-methionine synthase (247 aa).

Residues Y39, 64–66 (GCS), 89–90 (DN), 117–118 (DI), N132, and R199 each bind S-adenosyl-L-methionine.

The protein belongs to the class I-like SAM-binding methyltransferase superfamily. Cx-SAM synthase family. In terms of assembly, homodimer.

The catalysed reaction is prephenate + S-adenosyl-L-methionine = carboxy-S-adenosyl-L-methionine + 3-phenylpyruvate + H2O. Its function is as follows. Catalyzes the conversion of S-adenosyl-L-methionine (SAM) to carboxy-S-adenosyl-L-methionine (Cx-SAM). This Shigella boydii serotype 4 (strain Sb227) protein is Carboxy-S-adenosyl-L-methionine synthase.